The primary structure comprises 234 residues: Sugar fermentation stimulation protein homolog (234 aa).

It belongs to the SfsA family.

The protein is Sugar fermentation stimulation protein homolog of Photobacterium profundum (strain SS9).